The chain runs to 167 residues: 2-C-methyl-D-erythritol 2,4-cyclodiphosphate synthase (167 aa).

Positions 8 and 10 each coordinate a divalent metal cation. 4-CDP-2-C-methyl-D-erythritol 2-phosphate-binding positions include 8–10 and 34–35; these read DIH and HS. H42 provides a ligand contact to a divalent metal cation. Residues 56 to 58 and R142 each bind 4-CDP-2-C-methyl-D-erythritol 2-phosphate; that span reads DIG.

It belongs to the IspF family. As to quaternary structure, homotrimer. A divalent metal cation serves as cofactor.

The enzyme catalyses 4-CDP-2-C-methyl-D-erythritol 2-phosphate = 2-C-methyl-D-erythritol 2,4-cyclic diphosphate + CMP. It participates in isoprenoid biosynthesis; isopentenyl diphosphate biosynthesis via DXP pathway; isopentenyl diphosphate from 1-deoxy-D-xylulose 5-phosphate: step 4/6. In terms of biological role, involved in the biosynthesis of isopentenyl diphosphate (IPP) and dimethylallyl diphosphate (DMAPP), two major building blocks of isoprenoid compounds. Catalyzes the conversion of 4-diphosphocytidyl-2-C-methyl-D-erythritol 2-phosphate (CDP-ME2P) to 2-C-methyl-D-erythritol 2,4-cyclodiphosphate (ME-CPP) with a corresponding release of cytidine 5-monophosphate (CMP). In Buchnera aphidicola subsp. Schizaphis graminum (strain Sg), this protein is 2-C-methyl-D-erythritol 2,4-cyclodiphosphate synthase.